The primary structure comprises 246 residues: Ribonuclease 3 (246 aa).

The 131-residue stretch at 16–146 folds into the RNase III domain; the sequence is ATELEAGIGY…LLAAVYLDGG (131 aa). E59 is a binding site for Mg(2+). D63 is an active-site residue. Mg(2+)-binding residues include N132 and E135. E135 is an active-site residue. The 70-residue stretch at 173 to 242 folds into the DRBM domain; the sequence is DFKTEFQEMV…ARQVLARFAA (70 aa).

This sequence belongs to the ribonuclease III family. In terms of assembly, homodimer. Mg(2+) is required as a cofactor.

The protein resides in the cytoplasm. It catalyses the reaction Endonucleolytic cleavage to 5'-phosphomonoester.. Digests double-stranded RNA. Involved in the processing of primary rRNA transcript to yield the immediate precursors to the large and small rRNAs (23S and 16S). Processes some mRNAs, and tRNAs when they are encoded in the rRNA operon. Processes pre-crRNA and tracrRNA of type II CRISPR loci if present in the organism. This chain is Ribonuclease 3, found in Geobacter metallireducens (strain ATCC 53774 / DSM 7210 / GS-15).